The sequence spans 166 residues: Cyanate hydratase (166 aa).

Active-site residues include arginine 92, glutamate 95, and serine 118.

This sequence belongs to the cyanase family.

It catalyses the reaction cyanate + hydrogencarbonate + 3 H(+) = NH4(+) + 2 CO2. Its function is as follows. Catalyzes the reaction of cyanate with bicarbonate to produce ammonia and carbon dioxide. The chain is Cyanate hydratase from Zea mays (Maize).